The sequence spans 396 residues: Odorant receptor 49a (396 aa).

The Cytoplasmic portion of the chain corresponds to 1–6 (MEKLRS). A helical transmembrane segment spans residues 7-27 (YEDFIFMANMMFKTLGYDLFH). Residues 28–34 (TPKPWWR) lie on the Extracellular side of the membrane. A helical transmembrane segment spans residues 35 to 55 (YLLVRGYFVLCTISNFYEASM). Residues 56-70 (VTTRIIEWESLAGSP) are Cytoplasmic-facing. A helical membrane pass occupies residues 71 to 91 (SKIMRQGLHFFYMLSSQLKFI). The Extracellular segment spans residues 92-141 (TFMINRKRLLQLSHRLKELYPHKEQNQRKYEVNKYYLSCSTRNVLYVYYF). Residues 142-162 (VMVVMALEPLVQSCIMYLIGF) traverse the membrane as a helical segment. Over 163-209 (GKADFTYKRIFPTRLTFDSEKPLGYVLAYVIDFTYSQFIVNVSLGTD) the chain is Cytoplasmic. A helical membrane pass occupies residues 210-230 (LWMMCVSSQISMHLGYLANML). At 231–266 (ASIRPSPETEQQDCDFLASIIKRHQLMIRLQKDVNY) the chain is on the extracellular side. A helical membrane pass occupies residues 267–287 (VFGLLLASNLFTTSCLLCCMA). Topologically, residues 288-296 (YYTVVEGFN) are cytoplasmic. A helical transmembrane segment spans residues 297 to 317 (WEGISYMMLFASVAAQFYVVS). Topologically, residues 318 to 396 (SHGQMLIDLS…FAVIRQTVEK (79 aa)) are extracellular.

Belongs to the insect chemoreceptor superfamily. Heteromeric odorant receptor channel (TC 1.A.69) family. Or49a subfamily. As to quaternary structure, interacts with Orco. Complexes exist early in the endomembrane system in olfactory sensory neurons (OSNs), coupling these complexes to the conserved ciliary trafficking pathway.

The protein resides in the cell membrane. In terms of biological role, odorant receptor which mediates acceptance or avoidance behavior, depending on its substrates. The odorant receptor repertoire encodes a large collection of odor stimuli that vary widely in identity, intensity, and duration. May form a complex with Orco to form odorant-sensing units, providing sensitive and prolonged odorant signaling and calcium permeability. Involved in the behavioral responses to butanol and 2-heptanone. This is Odorant receptor 49a (Or49a) from Drosophila melanogaster (Fruit fly).